The chain runs to 739 residues: DNA ligase (739 aa).

The segment at 1–29 (MTANRPALPTRDKAVSDLSATEASDEHAA) is disordered. NAD(+) contacts are provided by residues 51–55 (DADYD), 100–101 (SL), and E134. The active-site N6-AMP-lysine intermediate is the K136. Positions 157, 194, 311, and 335 each coordinate NAD(+). The Zn(2+) site is built by C440, C443, C464, and C470. Residues 592–612 (PTEMEEASEETPPTRRRKPQG) are disordered. One can recognise a BRCT domain in the interval 662-739 (ASTSPVSGKT…TEDEWFDLVG (78 aa)).

Belongs to the NAD-dependent DNA ligase family. LigA subfamily. Mg(2+) serves as cofactor. Mn(2+) is required as a cofactor.

It catalyses the reaction NAD(+) + (deoxyribonucleotide)n-3'-hydroxyl + 5'-phospho-(deoxyribonucleotide)m = (deoxyribonucleotide)n+m + AMP + beta-nicotinamide D-nucleotide.. Its function is as follows. DNA ligase that catalyzes the formation of phosphodiester linkages between 5'-phosphoryl and 3'-hydroxyl groups in double-stranded DNA using NAD as a coenzyme and as the energy source for the reaction. It is essential for DNA replication and repair of damaged DNA. This is DNA ligase from Azorhizobium caulinodans (strain ATCC 43989 / DSM 5975 / JCM 20966 / LMG 6465 / NBRC 14845 / NCIMB 13405 / ORS 571).